Consider the following 96-residue polypeptide: Large ribosomal subunit protein uL23 (96 aa).

The protein belongs to the universal ribosomal protein uL23 family. In terms of assembly, part of the 50S ribosomal subunit. Contacts protein L29, and trigger factor when it is bound to the ribosome.

Functionally, one of the early assembly proteins it binds 23S rRNA. One of the proteins that surrounds the polypeptide exit tunnel on the outside of the ribosome. Forms the main docking site for trigger factor binding to the ribosome. This Syntrophus aciditrophicus (strain SB) protein is Large ribosomal subunit protein uL23.